The chain runs to 613 residues: Dihydroxy-acid dehydratase (613 aa).

A Mg(2+)-binding site is contributed by Asp81. Residue Cys122 coordinates [2Fe-2S] cluster. 2 residues coordinate Mg(2+): Asp123 and Lys124. An N6-carboxylysine modification is found at Lys124. Cys195 lines the [2Fe-2S] cluster pocket. Mg(2+) is bound at residue Glu491. Ser517 acts as the Proton acceptor in catalysis.

Belongs to the IlvD/Edd family. As to quaternary structure, homodimer. [2Fe-2S] cluster is required as a cofactor. The cofactor is Mg(2+).

It catalyses the reaction (2R)-2,3-dihydroxy-3-methylbutanoate = 3-methyl-2-oxobutanoate + H2O. The enzyme catalyses (2R,3R)-2,3-dihydroxy-3-methylpentanoate = (S)-3-methyl-2-oxopentanoate + H2O. It participates in amino-acid biosynthesis; L-isoleucine biosynthesis; L-isoleucine from 2-oxobutanoate: step 3/4. It functions in the pathway amino-acid biosynthesis; L-valine biosynthesis; L-valine from pyruvate: step 3/4. In terms of biological role, functions in the biosynthesis of branched-chain amino acids. Catalyzes the dehydration of (2R,3R)-2,3-dihydroxy-3-methylpentanoate (2,3-dihydroxy-3-methylvalerate) into 2-oxo-3-methylpentanoate (2-oxo-3-methylvalerate) and of (2R)-2,3-dihydroxy-3-methylbutanoate (2,3-dihydroxyisovalerate) into 2-oxo-3-methylbutanoate (2-oxoisovalerate), the penultimate precursor to L-isoleucine and L-valine, respectively. In Aeromonas hydrophila subsp. hydrophila (strain ATCC 7966 / DSM 30187 / BCRC 13018 / CCUG 14551 / JCM 1027 / KCTC 2358 / NCIMB 9240 / NCTC 8049), this protein is Dihydroxy-acid dehydratase.